The primary structure comprises 150 residues: Large ribosomal subunit protein uL22c (150 aa).

The protein belongs to the universal ribosomal protein uL22 family. As to quaternary structure, part of the 50S ribosomal subunit.

The protein resides in the plastid. It is found in the chloroplast. Its function is as follows. This protein binds specifically to 23S rRNA. In terms of biological role, the globular domain of the protein is located near the polypeptide exit tunnel on the outside of the subunit, while an extended beta-hairpin is found that lines the wall of the exit tunnel in the center of the 70S ribosome. This chain is Large ribosomal subunit protein uL22c (rpl22), found in Fagopyrum esculentum subsp. ancestrale (Wild buckwheat).